A 130-amino-acid polypeptide reads, in one-letter code: Histone H2A.2 (130 aa).

An N6-acetyllysine mark is found at Lys4 and Lys6. An N5-methylglutamine modification is found at Gln104. Lys125 is covalently cross-linked (Glycyl lysine isopeptide (Lys-Gly) (interchain with G-Cter in SUMO)). Ser127 carries the phosphoserine modification. The short motif at 127–128 (SQ) is the [ST]-Q motif element.

Belongs to the histone H2A family. As to quaternary structure, the nucleosome is a histone octamer containing two molecules each of H2A, H2B, H3 and H4 assembled in one H3-H4 heterotetramer and two H2A-H2B heterodimers. The octamer wraps approximately 147 bp of DNA. In terms of processing, phosphorylated to form H2AS128ph (gamma-H2A) in response to DNA double-strand breaks (DSBs) generated by exogenous genotoxic agents and by stalled replication forks. Phosphorylation is dependent on the DNA damage checkpoint kinases MEC1/ATR and TEL1/ATM, spreads on either side of a detected DSB site and may mark the surrounding chromatin for recruitment of proteins required for DNA damage signaling and repair. Gamma-H2A is removed from the DNA prior to the strand invasion-primer extension step of the repair process and subsequently dephosphorylated. Dephosphorylation is necessary for efficient recovery from the DNA damage checkpoint. Post-translationally, acetylated by ESA1 to form H2AK4ac and H2AK7ac.

The protein localises to the nucleus. It is found in the chromosome. Its function is as follows. Core component of nucleosome which plays a central role in DNA double strand break (DSB) repair. Nucleosomes wrap and compact DNA into chromatin, limiting DNA accessibility to the cellular machineries which require DNA as a template. Histones thereby play a central role in transcription regulation, DNA repair, DNA replication and chromosomal stability. DNA accessibility is regulated via a complex set of post-translational modifications of histones, also called histone code, and nucleosome remodeling. The sequence is that of Histone H2A.2 (HTA2) from Meyerozyma guilliermondii (strain ATCC 6260 / CBS 566 / DSM 6381 / JCM 1539 / NBRC 10279 / NRRL Y-324) (Yeast).